A 219-amino-acid chain; its full sequence is Probable GTP-binding protein EngB (219 aa).

The region spanning Ser-42–Leu-219 is the EngB-type G domain. GTP-binding positions include Gly-50–Ser-57, Gly-77–Glu-81, Asp-97–Gly-100, Thr-164–Asp-167, and Thr-198–Ser-200. Residues Ser-57 and Thr-79 each coordinate Mg(2+).

It belongs to the TRAFAC class TrmE-Era-EngA-EngB-Septin-like GTPase superfamily. EngB GTPase family. Requires Mg(2+) as cofactor.

In terms of biological role, necessary for normal cell division and for the maintenance of normal septation. In Sphingopyxis alaskensis (strain DSM 13593 / LMG 18877 / RB2256) (Sphingomonas alaskensis), this protein is Probable GTP-binding protein EngB.